A 367-amino-acid polypeptide reads, in one-letter code: Heme A synthase (367 aa).

The next 8 helical transmembrane spans lie at Ala-25 to Gly-45, Leu-111 to Gly-131, Trp-139 to Val-159, Leu-174 to Gly-194, Gly-210 to Ala-230, Phe-272 to Ala-292, Ala-305 to Met-325, and Val-327 to Val-347. His-274 is a heme binding site. His-335 is a heme binding site.

This sequence belongs to the COX15/CtaA family. Type 2 subfamily. Interacts with CtaB. Heme b serves as cofactor.

The protein localises to the cell membrane. It carries out the reaction Fe(II)-heme o + 2 A + H2O = Fe(II)-heme a + 2 AH2. It participates in porphyrin-containing compound metabolism; heme A biosynthesis; heme A from heme O: step 1/1. Functionally, catalyzes the conversion of heme O to heme A by two successive hydroxylations of the methyl group at C8. The first hydroxylation forms heme I, the second hydroxylation results in an unstable dihydroxymethyl group, which spontaneously dehydrates, resulting in the formyl group of heme A. The protein is Heme A synthase of Rhizobium etli (strain ATCC 51251 / DSM 11541 / JCM 21823 / NBRC 15573 / CFN 42).